The chain runs to 370 residues: Peptide chain release factor 1 (370 aa).

Position 239 is an N5-methylglutamine (glutamine 239).

It belongs to the prokaryotic/mitochondrial release factor family. In terms of processing, methylated by PrmC. Methylation increases the termination efficiency of RF1.

Its subcellular location is the cytoplasm. Functionally, peptide chain release factor 1 directs the termination of translation in response to the peptide chain termination codons UAG and UAA. The protein is Peptide chain release factor 1 of Bacteroides thetaiotaomicron (strain ATCC 29148 / DSM 2079 / JCM 5827 / CCUG 10774 / NCTC 10582 / VPI-5482 / E50).